A 130-amino-acid polypeptide reads, in one-letter code: Small ribosomal subunit protein uS9 (130 aa).

This sequence belongs to the universal ribosomal protein uS9 family.

The sequence is that of Small ribosomal subunit protein uS9 from Burkholderia vietnamiensis (strain G4 / LMG 22486) (Burkholderia cepacia (strain R1808)).